Consider the following 202-residue polypeptide: Pyridoxal 5'-phosphate synthase subunit PdxT (202 aa).

52 to 54 (GES) is an L-glutamine binding site. The active-site Nucleophile is Cys-84. L-glutamine contacts are provided by residues Arg-120 and 148-149 (IR). Active-site charge relay system residues include His-185 and Glu-187.

Belongs to the glutaminase PdxT/SNO family. In the presence of PdxS, forms a dodecamer of heterodimers. Only shows activity in the heterodimer.

It carries out the reaction aldehydo-D-ribose 5-phosphate + D-glyceraldehyde 3-phosphate + L-glutamine = pyridoxal 5'-phosphate + L-glutamate + phosphate + 3 H2O + H(+). The catalysed reaction is L-glutamine + H2O = L-glutamate + NH4(+). It functions in the pathway cofactor biosynthesis; pyridoxal 5'-phosphate biosynthesis. In terms of biological role, catalyzes the hydrolysis of glutamine to glutamate and ammonia as part of the biosynthesis of pyridoxal 5'-phosphate. The resulting ammonia molecule is channeled to the active site of PdxS. In Methanopyrus kandleri (strain AV19 / DSM 6324 / JCM 9639 / NBRC 100938), this protein is Pyridoxal 5'-phosphate synthase subunit PdxT.